A 184-amino-acid chain; its full sequence is ATP synthase subunit b, chloroplastic (184 aa).

A helical membrane pass occupies residues 26 to 48; it reads ILATNLINLSVVLGVLIFFGKGV.

The protein belongs to the ATPase B chain family. In terms of assembly, F-type ATPases have 2 components, F(1) - the catalytic core - and F(0) - the membrane proton channel. F(1) has five subunits: alpha(3), beta(3), gamma(1), delta(1), epsilon(1). F(0) has four main subunits: a(1), b(1), b'(1) and c(10-14). The alpha and beta chains form an alternating ring which encloses part of the gamma chain. F(1) is attached to F(0) by a central stalk formed by the gamma and epsilon chains, while a peripheral stalk is formed by the delta, b and b' chains.

It localises to the plastid. It is found in the chloroplast thylakoid membrane. Its function is as follows. F(1)F(0) ATP synthase produces ATP from ADP in the presence of a proton or sodium gradient. F-type ATPases consist of two structural domains, F(1) containing the extramembraneous catalytic core and F(0) containing the membrane proton channel, linked together by a central stalk and a peripheral stalk. During catalysis, ATP synthesis in the catalytic domain of F(1) is coupled via a rotary mechanism of the central stalk subunits to proton translocation. Component of the F(0) channel, it forms part of the peripheral stalk, linking F(1) to F(0). The polypeptide is ATP synthase subunit b, chloroplastic (Acorus calamus (Sweet flag)).